We begin with the raw amino-acid sequence, 37 residues long: MKVRPSVKKMCDKCRVIKRHGKIMVICSNPKHKQRQG.

It belongs to the bacterial ribosomal protein bL36 family.

It is found in the plastid. The protein resides in the chloroplast. The protein is Large ribosomal subunit protein bL36c of Phaeodactylum tricornutum (strain CCAP 1055/1).